Reading from the N-terminus, the 347-residue chain is Phosphoribosylformylglycinamidine cyclo-ligase (347 aa).

The protein belongs to the AIR synthase family.

The protein resides in the cytoplasm. The enzyme catalyses 2-formamido-N(1)-(5-O-phospho-beta-D-ribosyl)acetamidine + ATP = 5-amino-1-(5-phospho-beta-D-ribosyl)imidazole + ADP + phosphate + H(+). It functions in the pathway purine metabolism; IMP biosynthesis via de novo pathway; 5-amino-1-(5-phospho-D-ribosyl)imidazole from N(2)-formyl-N(1)-(5-phospho-D-ribosyl)glycinamide: step 2/2. The chain is Phosphoribosylformylglycinamidine cyclo-ligase from Prochlorococcus marinus (strain MIT 9215).